Consider the following 205-residue polypeptide: Thiamine-phosphate synthase (205 aa).

Residues 34–38 and Asn66 contribute to the 4-amino-2-methyl-5-(diphosphooxymethyl)pyrimidine site; that span reads QLRCK. Mg(2+) is bound by residues Asp67 and Asp86. Residue Ser105 coordinates 4-amino-2-methyl-5-(diphosphooxymethyl)pyrimidine. 131 to 133 is a 2-[(2R,5Z)-2-carboxy-4-methylthiazol-5(2H)-ylidene]ethyl phosphate binding site; sequence TTT. Residue Lys134 participates in 4-amino-2-methyl-5-(diphosphooxymethyl)pyrimidine binding. Gly163 is a 2-[(2R,5Z)-2-carboxy-4-methylthiazol-5(2H)-ylidene]ethyl phosphate binding site.

This sequence belongs to the thiamine-phosphate synthase family. The cofactor is Mg(2+).

It carries out the reaction 2-[(2R,5Z)-2-carboxy-4-methylthiazol-5(2H)-ylidene]ethyl phosphate + 4-amino-2-methyl-5-(diphosphooxymethyl)pyrimidine + 2 H(+) = thiamine phosphate + CO2 + diphosphate. The catalysed reaction is 2-(2-carboxy-4-methylthiazol-5-yl)ethyl phosphate + 4-amino-2-methyl-5-(diphosphooxymethyl)pyrimidine + 2 H(+) = thiamine phosphate + CO2 + diphosphate. The enzyme catalyses 4-methyl-5-(2-phosphooxyethyl)-thiazole + 4-amino-2-methyl-5-(diphosphooxymethyl)pyrimidine + H(+) = thiamine phosphate + diphosphate. The protein operates within cofactor biosynthesis; thiamine diphosphate biosynthesis; thiamine phosphate from 4-amino-2-methyl-5-diphosphomethylpyrimidine and 4-methyl-5-(2-phosphoethyl)-thiazole: step 1/1. In terms of biological role, condenses 4-methyl-5-(beta-hydroxyethyl)thiazole monophosphate (THZ-P) and 2-methyl-4-amino-5-hydroxymethyl pyrimidine pyrophosphate (HMP-PP) to form thiamine monophosphate (TMP). The protein is Thiamine-phosphate synthase of Neisseria gonorrhoeae (strain ATCC 700825 / FA 1090).